The primary structure comprises 2375 residues: CCR4-NOT transcription complex subunit 1 (2375 aa).

Short sequence motifs (LXXLL) lie at residues 153 to 157, 181 to 185, and 223 to 227; these read LPDLL, LHLLL, and LAPLL. The residue at position 318 (Ser318) is a Phosphoserine. Positions 570-574 match the LXXLL motif; the sequence is LSMLL. Residues 725 to 770 are disordered; sequence SAAPHTQSMQGFPPNLGSAFSTPQSPAKAFPPLSTPNQTTAFSGIG. Positions 799–1014 are interaction with ZFP36; the sequence is NNDPFVQRKL…QGSITTPGSI (216 aa). Ser1060 is subject to Phosphoserine. The interaction with CNOT6, CNOT6L, CNOT7 and CNOT8 stretch occupies residues 1089–1604; the sequence is EPPENIQEKI…AQPMKQAWAT (516 aa). The segment covering 1314–1326 has biased composition (basic and acidic residues); sequence QLSAPKKDVKQPE. A disordered region spans residues 1314-1351; the sequence is QLSAPKKDVKQPEELPAITTTTTSTTPATSTTCTATVP. A compositionally biased stretch (low complexity) spans 1332–1349; the sequence is TTTTTSTTPATSTTCTAT. Short sequence motifs (LXXLL) lie at residues 1638-1642, 1941-1945, and 2095-2099; these read LRSLL, LIALL, and LRVLL.

The protein belongs to the CNOT1 family. As to quaternary structure, component of the CCR4-NOT complex; distinct complexes seem to exist that differ in the participation of probably mutually exclusive catalytic subunits. In the complex, interacts directly with CNOT6, CNOT6L, CNOT7 or CNOT8. Interacts in a ligand-dependent fashion with ESR1 and RXRA. Interacts with NANOS2, TOB1 and ZFP36. Interacts with TNRC6A, TNRC6B or TNRC6C; the interactions are direct. Interacts with YTHDF2; the interaction is direct and promotes recruitment of the CCR4-NOT complex to N6-methyladenosine (m6A)-containing mRNAs, leading to their deadenylation and subsequent degradation. Interacts with EIF4ENIF1/4E-T. Interacts in an RNA-independent manner with BICC1 (via KH domains). Interacts with TEX13A; the interaction may inhibit CNOT1 binding to mRNA and subsequently CNOT1-mediated mRNA degradation.

It is found in the cytoplasm. The protein resides in the P-body. Its subcellular location is the nucleus. In terms of biological role, scaffolding component of the CCR4-NOT complex which is one of the major cellular mRNA deadenylases and is linked to various cellular processes including bulk mRNA degradation, miRNA-mediated repression, translational repression during translational initiation and general transcription regulation. Additional complex functions may be a consequence of its influence on mRNA expression. Its scaffolding function implies its interaction with the catalytic complex module and diverse RNA-binding proteins mediating the complex recruitment to selected mRNA 3'UTRs. Involved in degradation of AU-rich element (ARE)-containing mRNAs probably via association with ZFP36. Mediates the recruitment of the CCR4-NOT complex to miRNA targets and to the RISC complex via association with TNRC6A, TNRC6B or TNRC6C. Acts as a transcriptional repressor. Represses the ligand-dependent transcriptional activation by nuclear receptors. Involved in the maintenance of embryonic stem (ES) cell identity; prevents their differentiation towards extraembryonic trophectoderm lineages. Plays a role in rapid sperm motility via mediating timely mRNA turnover. The chain is CCR4-NOT transcription complex subunit 1 (Cnot1) from Mus musculus (Mouse).